Reading from the N-terminus, the 326-residue chain is BTB/POZ domain-containing protein At1g21780 (326 aa).

The region spanning Thr161–Phe228 is the BTB domain.

Homodimer. Interacts with CUL3A and CUL3B.

The protein operates within protein modification; protein ubiquitination. Functionally, may act as a substrate-specific adapter of an E3 ubiquitin-protein ligase complex (CUL3-RBX1-BTB) which mediates the ubiquitination and subsequent proteasomal degradation of target proteins. The polypeptide is BTB/POZ domain-containing protein At1g21780 (Arabidopsis thaliana (Mouse-ear cress)).